The chain runs to 284 residues: 2-dehydro-3-deoxyphosphooctonate aldolase (284 aa).

This sequence belongs to the KdsA family.

It localises to the cytoplasm. The enzyme catalyses D-arabinose 5-phosphate + phosphoenolpyruvate + H2O = 3-deoxy-alpha-D-manno-2-octulosonate-8-phosphate + phosphate. Its pathway is carbohydrate biosynthesis; 3-deoxy-D-manno-octulosonate biosynthesis; 3-deoxy-D-manno-octulosonate from D-ribulose 5-phosphate: step 2/3. It functions in the pathway bacterial outer membrane biogenesis; lipopolysaccharide biosynthesis. The chain is 2-dehydro-3-deoxyphosphooctonate aldolase from Aliivibrio fischeri (strain ATCC 700601 / ES114) (Vibrio fischeri).